Consider the following 101-residue polypeptide: MMLEHILVLSAYLFSIGIYGLITSRNMVRALMCLELIFNSVNINFVTFSGFFDNRQLRGDIFSVFVFAIAAAEAAIGLAIVSSIYRNRKSTRINQSNLLNK.

3 helical membrane passes run 2 to 22 (MLEH…YGLI), 32 to 52 (MCLE…SGFF), and 61 to 81 (IFSV…LAIV).

It belongs to the complex I subunit 4L family. As to quaternary structure, NDH is composed of at least 16 different subunits, 5 of which are encoded in the nucleus.

It is found in the plastid. It localises to the chloroplast thylakoid membrane. It catalyses the reaction a plastoquinone + NADH + (n+1) H(+)(in) = a plastoquinol + NAD(+) + n H(+)(out). The enzyme catalyses a plastoquinone + NADPH + (n+1) H(+)(in) = a plastoquinol + NADP(+) + n H(+)(out). Its function is as follows. NDH shuttles electrons from NAD(P)H:plastoquinone, via FMN and iron-sulfur (Fe-S) centers, to quinones in the photosynthetic chain and possibly in a chloroplast respiratory chain. The immediate electron acceptor for the enzyme in this species is believed to be plastoquinone. Couples the redox reaction to proton translocation, and thus conserves the redox energy in a proton gradient. This chain is NAD(P)H-quinone oxidoreductase subunit 4L, chloroplastic, found in Jasminum nudiflorum (Winter jasmine).